The following is a 363-amino-acid chain: Glycerol-3-phosphate dehydrogenase [NAD(+)], cytoplasmic (363 aa).

Residues 11-16 (GSGNWG), Phe-98, Lys-121, and Ala-155 each bind NAD(+). Substrate is bound at residue Lys-121. Catalysis depends on Lys-206, which acts as the Proton acceptor. NAD(+) contacts are provided by Arg-270 and Gln-299. Residue 270-271 (RN) participates in substrate binding.

The protein belongs to the NAD-dependent glycerol-3-phosphate dehydrogenase family. Homodimer. Isoform GPDH-1 is predominant in thorax and isoform GPDH-3 in abdomen.

Its subcellular location is the cytoplasm. The enzyme catalyses sn-glycerol 3-phosphate + NAD(+) = dihydroxyacetone phosphate + NADH + H(+). Its pathway is phospholipid metabolism; alpha-glycerophosphate cycle. The polypeptide is Glycerol-3-phosphate dehydrogenase [NAD(+)], cytoplasmic (Drosophila melanogaster (Fruit fly)).